The following is a 503-amino-acid chain: ATP-dependent RNA helicase dbp3 (503 aa).

Positions 1-25 (MAKRVQHEGGDYRPQKRSKNERNGE) are enriched in basic and acidic residues. The tract at residues 1–35 (MAKRVQHEGGDYRPQKRSKNERNGEGSKVSPSAEA) is disordered. The Q motif signature appears at 104–112 (SFSSPTPIQ). The 177-residue stretch at 116–292 (WPLLFAGRDV…ATFMTSAVTV (177 aa)) folds into the Helicase ATP-binding domain. Residue 129-136 (AETGSGKT) participates in ATP binding. Residues 239–242 (DEAD) carry the DEAD box motif. In terms of domain architecture, Helicase C-terminal spans 307–472 (RIKQVVEVVK…DVPDALLKFG (166 aa)).

Belongs to the DEAD box helicase family. DDX5/DBP2 subfamily.

It is found in the nucleus. The protein localises to the nucleolus. It carries out the reaction ATP + H2O = ADP + phosphate + H(+). Functionally, ATP-dependent RNA helicase required for 60S ribosomal subunit synthesis. Involved in efficient pre-rRNA processing, predominantly at site A3, which is necessary for the normal formation of 25S and 5.8S rRNAs. The polypeptide is ATP-dependent RNA helicase dbp3 (dbp3) (Neosartorya fischeri (strain ATCC 1020 / DSM 3700 / CBS 544.65 / FGSC A1164 / JCM 1740 / NRRL 181 / WB 181) (Aspergillus fischerianus)).